Consider the following 326-residue polypeptide: Glycerol-3-phosphate dehydrogenase [NAD(P)+] (326 aa).

NADPH-binding residues include Trp-15, Arg-35, and Lys-107. Sn-glycerol 3-phosphate is bound by residues Lys-107, Gly-135, and Ser-137. Ala-139 is a binding site for NADPH. Residues Lys-190, Asp-243, Ser-253, Arg-254, and Asn-255 each contribute to the sn-glycerol 3-phosphate site. Lys-190 functions as the Proton acceptor in the catalytic mechanism. Position 254 (Arg-254) interacts with NADPH. Leu-273 and Glu-275 together coordinate NADPH.

This sequence belongs to the NAD-dependent glycerol-3-phosphate dehydrogenase family.

The protein resides in the cytoplasm. The catalysed reaction is sn-glycerol 3-phosphate + NAD(+) = dihydroxyacetone phosphate + NADH + H(+). The enzyme catalyses sn-glycerol 3-phosphate + NADP(+) = dihydroxyacetone phosphate + NADPH + H(+). It functions in the pathway membrane lipid metabolism; glycerophospholipid metabolism. Its function is as follows. Catalyzes the reduction of the glycolytic intermediate dihydroxyacetone phosphate (DHAP) to sn-glycerol 3-phosphate (G3P), the key precursor for phospholipid synthesis. This is Glycerol-3-phosphate dehydrogenase [NAD(P)+] from Bradyrhizobium diazoefficiens (strain JCM 10833 / BCRC 13528 / IAM 13628 / NBRC 14792 / USDA 110).